We begin with the raw amino-acid sequence, 101 residues long: Small ribosomal subunit protein uS14 (101 aa).

The protein belongs to the universal ribosomal protein uS14 family. Part of the 30S ribosomal subunit. Contacts proteins S3 and S10.

In terms of biological role, binds 16S rRNA, required for the assembly of 30S particles and may also be responsible for determining the conformation of the 16S rRNA at the A site. The chain is Small ribosomal subunit protein uS14 from Ruthia magnifica subsp. Calyptogena magnifica.